The following is a 28-amino-acid chain: Peptide 2 (28 aa).

The protein belongs to the short scorpion toxin superfamily. Potassium channel inhibitor family. Alpha-KTx 09 subfamily. Expressed by the venom gland.

It localises to the secreted. Its function is as follows. Blocks potassium channels. The chain is Peptide 2 from Hottentotta tamulus sindicus (Scorpion).